We begin with the raw amino-acid sequence, 743 residues long: Cytosolic endo-beta-N-acetylglucosaminidase (743 aa).

Met-1 is modified (N-acetylmethionine). Positions 1–11 are enriched in low complexity; sequence MEAAAVTVTRS. Residues 1-55 are disordered; the sequence is MEAAAVTVTRSATRRRRRQLQGLAAPEAGTQEEQEDQEPRPRRRRPGRSIKDEEE. Ser-66 carries the post-translational modification Phosphoserine. The BRCT domain maps to 291 to 383; sequence RVFFDSCDGF…DFFQNQDKFW (93 aa).

This sequence belongs to the glycosyl hydrolase 85 family. As to expression, widely expressed. Expressed at higher level in thymus and spleen.

It is found in the cytoplasm. It localises to the cytosol. The catalysed reaction is an N(4)-(oligosaccharide-(1-&gt;3)-[oligosaccharide-(1-&gt;6)]-beta-D-Man-(1-&gt;4)-beta-D-GlcNAc-(1-&gt;4)-alpha-D-GlcNAc)-L-asparaginyl-[protein] + H2O = an oligosaccharide-(1-&gt;3)-[oligosaccharide-(1-&gt;6)]-beta-D-Man-(1-&gt;4)-D-GlcNAc + N(4)-(N-acetyl-beta-D-glucosaminyl)-L-asparaginyl-[protein]. In terms of biological role, endoglycosidase that releases N-glycans from glycoproteins by cleaving the beta-1,4-glycosidic bond in the N,N'-diacetylchitobiose core. Involved in the processing of free oligosaccharides in the cytosol. This chain is Cytosolic endo-beta-N-acetylglucosaminidase (ENGASE), found in Homo sapiens (Human).